A 364-amino-acid chain; its full sequence is Chorismate synthase (364 aa).

Positions 41-60 (MQHDLDRRRPGTSRYTTARR) are disordered. 2 residues coordinate NADP(+): arginine 48 and arginine 54. Residues 125-127 (RSS), 238-239 (NA), glycine 278, 293-297 (KPTSS), and arginine 319 each bind FMN.

This sequence belongs to the chorismate synthase family. Homotetramer. The cofactor is FMNH2.

It catalyses the reaction 5-O-(1-carboxyvinyl)-3-phosphoshikimate = chorismate + phosphate. Its pathway is metabolic intermediate biosynthesis; chorismate biosynthesis; chorismate from D-erythrose 4-phosphate and phosphoenolpyruvate: step 7/7. Its function is as follows. Catalyzes the anti-1,4-elimination of the C-3 phosphate and the C-6 proR hydrogen from 5-enolpyruvylshikimate-3-phosphate (EPSP) to yield chorismate, which is the branch point compound that serves as the starting substrate for the three terminal pathways of aromatic amino acid biosynthesis. This reaction introduces a second double bond into the aromatic ring system. This is Chorismate synthase from Shewanella sp. (strain MR-4).